The chain runs to 249 residues: NAD kinase (249 aa).

D45 acts as the Proton acceptor in catalysis. Residues D45 to G46, R50, N110 to E111, D138, and S149 to S154 contribute to the NAD(+) site.

It belongs to the NAD kinase family. The cofactor is a divalent metal cation.

Its subcellular location is the cytoplasm. The catalysed reaction is NAD(+) + ATP = ADP + NADP(+) + H(+). Its function is as follows. Involved in the regulation of the intracellular balance of NAD and NADP, and is a key enzyme in the biosynthesis of NADP. Catalyzes specifically the phosphorylation on 2'-hydroxyl of the adenosine moiety of NAD to yield NADP. The polypeptide is NAD kinase (Saccharolobus islandicus (strain Y.N.15.51 / Yellowstone #2) (Sulfolobus islandicus)).